A 310-amino-acid polypeptide reads, in one-letter code: Porphobilinogen deaminase (310 aa).

Cys240 carries the post-translational modification S-(dipyrrolylmethanemethyl)cysteine.

The protein belongs to the HMBS family. As to quaternary structure, monomer. Dipyrromethane is required as a cofactor.

It catalyses the reaction 4 porphobilinogen + H2O = hydroxymethylbilane + 4 NH4(+). It participates in porphyrin-containing compound metabolism; protoporphyrin-IX biosynthesis; coproporphyrinogen-III from 5-aminolevulinate: step 2/4. Functionally, tetrapolymerization of the monopyrrole PBG into the hydroxymethylbilane pre-uroporphyrinogen in several discrete steps. This chain is Porphobilinogen deaminase, found in Desulfosudis oleivorans (strain DSM 6200 / JCM 39069 / Hxd3) (Desulfococcus oleovorans).